A 251-amino-acid chain; its full sequence is Aquaporin (251 aa).

Residues 1–11 (MAGETLRKIQS) are Cytoplasmic-facing. A helical transmembrane segment spans residues 12-32 (LLGEMVASFIFGFAVYSAILG). The Extracellular portion of the chain corresponds to 33 to 42 (STIAQQPAAK). The chain crosses the membrane as a helical span at residues 43–63 (VIIGLTVGFSAIGIIYSFSDV). Topologically, residues 64 to 86 (TIAHFNPAITLAAILTGKMGILC) are cytoplasmic. The short motif at 69-71 (NPA) is the NPA element. Residues 87 to 107 (GLGYMLAQCVGFILAVCALLV) traverse the membrane as a helical segment. At 108–133 (CSPVGYKETLNVIRPAPAPFGADNLN) the chain is on the extracellular side. The helical transmembrane segment at 134–154 (VFFTEFFLTAILVHIAFAVAV) threads the bilayer. Residues 155–179 (NPYRPKVDTDGKFVDPDEKEPVDRR) are Cytoplasmic-facing. Residues 180 to 200 (ITAPLCIGLTLGFLAFMGLVT) form a helical membrane-spanning segment. Over 201-224 (SGGAFNPGLTLAPVIMSNTWQHFW) the chain is Extracellular. Residues 206 to 208 (NPG) carry the NPG motif. The chain crosses the membrane as a helical span at residues 225–245 (LYLGAQYLGGLVGGLLQVFVL). Over 246 to 251 (YKLSSN) the chain is Cytoplasmic.

It belongs to the MIP/aquaporin (TC 1.A.8) family.

The protein localises to the cell membrane. Water channel required to facilitate the transport of water across membranes. Involved in osmotolerance. This chain is Aquaporin (AQP), found in Encephalitozoon hellem (Microsporidian parasite).